A 129-amino-acid polypeptide reads, in one-letter code: Protein Turandot A (129 aa).

The N-terminal stretch at 1 to 21 (MNSSTALMCFALLLISPLCMG) is a signal peptide. Residue Asn-49 is glycosylated (N-linked (GlcNAc...) asparagine).

This sequence belongs to the Turandot family. Expressed in the fat body (at protein level).

It is found in the secreted. A humoral factor that plays a role in stress tolerance; gives increased resistance to the lethal effects of bacterial challenge and stress. Regulated by the JAK/STAT pathway and NF-KB-like Relish pathway in the fat body, upd3 in the hemocytes and Mekk1 in response to septic injury and consequent immune response. This is Protein Turandot A from Drosophila melanogaster (Fruit fly).